Here is an 896-residue protein sequence, read N- to C-terminus: Protein translocase subunit SecA (896 aa).

Residues Q87, 105–109 (GEGKT), and D512 contribute to the ATP site. 2 disordered regions span residues 565 to 584 (RRID…PGSS) and 840 to 896 (EAAQ…AHEA). Zn(2+)-binding residues include C876, C878, C887, and H888. The segment covering 882–896 (KKYKHCHGNRAAHEA) has biased composition (basic residues).

It belongs to the SecA family. As to quaternary structure, monomer and homodimer. Part of the essential Sec protein translocation apparatus which comprises SecA, SecYEG and auxiliary proteins SecDF-YajC and YidC. Zn(2+) serves as cofactor.

The protein localises to the cell inner membrane. Its subcellular location is the cytoplasm. The enzyme catalyses ATP + H2O + cellular proteinSide 1 = ADP + phosphate + cellular proteinSide 2.. Part of the Sec protein translocase complex. Interacts with the SecYEG preprotein conducting channel. Has a central role in coupling the hydrolysis of ATP to the transfer of proteins into and across the cell membrane, serving both as a receptor for the preprotein-SecB complex and as an ATP-driven molecular motor driving the stepwise translocation of polypeptide chains across the membrane. The polypeptide is Protein translocase subunit SecA (Mannheimia succiniciproducens (strain KCTC 0769BP / MBEL55E)).